The chain runs to 185 residues: Ribosome-recycling factor (185 aa).

This sequence belongs to the RRF family.

The protein localises to the cytoplasm. Functionally, responsible for the release of ribosomes from messenger RNA at the termination of protein biosynthesis. May increase the efficiency of translation by recycling ribosomes from one round of translation to another. The chain is Ribosome-recycling factor from Treponema denticola (strain ATCC 35405 / DSM 14222 / CIP 103919 / JCM 8153 / KCTC 15104).